Here is a 498-residue protein sequence, read N- to C-terminus: Glycerol kinase (498 aa).

T12 contacts ADP. ATP-binding residues include T12, T13, and S14. T12 serves as a coordination point for sn-glycerol 3-phosphate. R16 lines the ADP pocket. Sn-glycerol 3-phosphate contacts are provided by R82, E83, Y134, and D244. Glycerol-binding residues include R82, E83, Y134, D244, and Q245. ADP-binding residues include T266 and G309. 4 residues coordinate ATP: T266, G309, Q313, and G410. ADP is bound by residues G410 and N414.

Belongs to the FGGY kinase family. In terms of assembly, homotetramer and homodimer (in equilibrium).

It carries out the reaction glycerol + ATP = sn-glycerol 3-phosphate + ADP + H(+). The protein operates within polyol metabolism; glycerol degradation via glycerol kinase pathway; sn-glycerol 3-phosphate from glycerol: step 1/1. Its activity is regulated as follows. Activated by phosphorylation and inhibited by fructose 1,6-bisphosphate (FBP). In terms of biological role, key enzyme in the regulation of glycerol uptake and metabolism. Catalyzes the phosphorylation of glycerol to yield sn-glycerol 3-phosphate. The chain is Glycerol kinase from Natranaerobius thermophilus (strain ATCC BAA-1301 / DSM 18059 / JW/NM-WN-LF).